Here is a 1087-residue protein sequence, read N- to C-terminus: Formin-H (1087 aa).

The span at 1-23 shows a compositional bias: polar residues; sequence MSFDLESNSSGGSTIGRNSSIRL. The tract at residues 1–25 is disordered; the sequence is MSFDLESNSSGGSTIGRNSSIRLSS. The GBD/FH3 domain occupies 34–394; sequence VSLNEIIDLD…QLEDELKIHP (361 aa). 2 stretches are compositionally biased toward low complexity: residues 416-436 and 549-558; these read FGFG…SMAK and SPGSTLSPSP. Disordered stretches follow at residues 416-445, 549-625, and 1048-1087; these read FGFG…DNEE, SPGS…PAKP, and VDSL…QLKK. The stretch at 433–461 forms a coiled coil; sequence SMAKTELKKDNEEKQKTIEHLLKQLNKFS. The segment covering 569 to 588 has biased composition (polar residues); that stretch reads FGITSSSIHTSTDKLTNSTE. An FH1 domain is found at 589–615; it reads PILGSPPPPPPPPMSGGGGPPPPPPPP. Positions 592 to 616 are enriched in pro residues; sequence GSPPPPPPPPMSGGGGPPPPPPPPG. The FH2 domain maps to 623-1016; it reads AKPIIKPSVK…ENSKMEDPEK (394 aa). A DAD domain is found at 1013-1051; the sequence is DPEKGGLQDLSSQIRSGQLFKDRRVGDSVIAQMQNVDSL.

The protein belongs to the formin homology family. Diaphanous subfamily. As to quaternary structure, interacts with vasP, proB/profilin-2 and rac1A. Interacts (via GBD/FH3 domain) with activated Rho-GTPases.

The protein resides in the cytoplasm. The protein localises to the cell cortex. It localises to the cytoskeleton. Functionally, formins play an important role in the nucleation of actin and the formation of linear actin filaments. Important for cell migration and formation, elongation and maintenance of filopodia. Specifically controls filopodial dynamics by regulating actin turnover at the barbed ends of actin filaments. This chain is Formin-H (forH), found in Dictyostelium discoideum (Social amoeba).